A 917-amino-acid polypeptide reads, in one-letter code: Alanine--tRNA ligase (917 aa).

Residues His-592, His-596, Cys-694, and His-698 each coordinate Zn(2+).

The protein belongs to the class-II aminoacyl-tRNA synthetase family. Zn(2+) is required as a cofactor.

The protein resides in the cytoplasm. The enzyme catalyses tRNA(Ala) + L-alanine + ATP = L-alanyl-tRNA(Ala) + AMP + diphosphate. Its function is as follows. Catalyzes the attachment of alanine to tRNA(Ala) in a two-step reaction: alanine is first activated by ATP to form Ala-AMP and then transferred to the acceptor end of tRNA(Ala). Also edits incorrectly charged Ser-tRNA(Ala) and Gly-tRNA(Ala) via its editing domain. The polypeptide is Alanine--tRNA ligase (Sorangium cellulosum (strain So ce56) (Polyangium cellulosum (strain So ce56))).